We begin with the raw amino-acid sequence, 273 residues long: Bis(5'-nucleosyl)-tetraphosphatase, symmetrical (273 aa).

The protein belongs to the Ap4A hydrolase family.

The catalysed reaction is P(1),P(4)-bis(5'-adenosyl) tetraphosphate + H2O = 2 ADP + 2 H(+). Its function is as follows. Hydrolyzes diadenosine 5',5'''-P1,P4-tetraphosphate to yield ADP. The sequence is that of Bis(5'-nucleosyl)-tetraphosphatase, symmetrical (apaH) from Buchnera aphidicola subsp. Schizaphis graminum (strain Sg).